Consider the following 199-residue polypeptide: Imidazole glycerol phosphate synthase subunit HisH (199 aa).

The region spanning 3-199 (NITIIDTGCA…LKNFVEKVPF (197 aa)) is the Glutamine amidotransferase type-1 domain. Cys78 serves as the catalytic Nucleophile. Active-site residues include His178 and Glu180.

Heterodimer of HisH and HisF.

Its subcellular location is the cytoplasm. It catalyses the reaction 5-[(5-phospho-1-deoxy-D-ribulos-1-ylimino)methylamino]-1-(5-phospho-beta-D-ribosyl)imidazole-4-carboxamide + L-glutamine = D-erythro-1-(imidazol-4-yl)glycerol 3-phosphate + 5-amino-1-(5-phospho-beta-D-ribosyl)imidazole-4-carboxamide + L-glutamate + H(+). The catalysed reaction is L-glutamine + H2O = L-glutamate + NH4(+). The protein operates within amino-acid biosynthesis; L-histidine biosynthesis; L-histidine from 5-phospho-alpha-D-ribose 1-diphosphate: step 5/9. Functionally, IGPS catalyzes the conversion of PRFAR and glutamine to IGP, AICAR and glutamate. The HisH subunit catalyzes the hydrolysis of glutamine to glutamate and ammonia as part of the synthesis of IGP and AICAR. The resulting ammonia molecule is channeled to the active site of HisF. In Haemophilus influenzae (strain ATCC 51907 / DSM 11121 / KW20 / Rd), this protein is Imidazole glycerol phosphate synthase subunit HisH (hisH).